The sequence spans 60 residues: KEKYRVVYTDHQRLELEKEFHCNRYITIRRKSELAVNLGLSERQVKSWFQNRRAKERKII.

Residues 1-60 (KEKYRVVYTDHQRLELEKEFHCNRYITIRRKSELAVNLGLSERQVKSWFQNRRAKERKII) constitute a DNA-binding region (homeobox).

The protein belongs to the Caudal homeobox family.

Its subcellular location is the nucleus. The sequence is that of Homeobox protein CHOX-CAD2 (CHOX-CAD2) from Gallus gallus (Chicken).